The following is a 502-amino-acid chain: MVNNNNKNNKINDRENEENEKNKKKDKIYENKIGINENNNENNNYQNENFIYTSGDSNDTQEGDISEIQEESTNENNKKLKKRKIKKTKSLYFYKCVTGPDKLFFIVTQIFILVPSLFFEIKLVPISLEISKKLEISNYIITLTLLVFIFYNLYKCAFTNPGIITRNNIEESKKDKIKLTKLQATKKALKKFITSGMDEIANDDPISSSSDFSDSDDDDQDEQGGSSSARNSFENSGDFIVEMEQPTNSNNNNSNNNNNNNKNRNRNNNNNNNNNNNNKNQSKYKEIQIGDSDFKYKCKFCITCGLYREPRSFHCSTCNNCVENFDHHCVWIGNCIGRRNYREFFYFITTTLIYALYLLSMSIVFLNQIVNTTESPANKINNNNINSNSSNHNSSNDLNEKFEKSINNILYALRTTSGGLCIFIIIFGFIMSLLLGFLVSYHIRLTLSNKSTIEDFKKIFENQINPYDKGWLFNLKIKLFNFNNSNNNININNNNTNNNINS.

Positions 1-80 (MVNNNNKNNK…ESTNENNKKL (80 aa)) are disordered. Basic and acidic residues predominate over residues 10–30 (KINDRENEENEKNKKKDKIYE). Positions 31-52 (NKIGINENNNENNNYQNENFIY) are enriched in low complexity. An N-linked (GlcNAc...) asparagine glycan is attached at Asn-58. The segment covering 59 to 73 (DTQEGDISEIQEEST) has biased composition (acidic residues). Transmembrane regions (helical) follow at residues 104–124 (FFIVTQIFILVPSLFFEIKLV) and 134–154 (LEISNYIITLTLLVFIFYNLY). Residues 200–281 (IANDDPISSS…NNNNNNNKNQ (82 aa)) are disordered. A compositionally biased stretch (low complexity) spans 203-212 (DDPISSSSDF). A compositionally biased stretch (acidic residues) spans 213-222 (SDSDDDDQDE). Residues 248–280 (NSNNNNSNNNNNNNKNRNRNNNNNNNNNNNNKN) are compositionally biased toward low complexity. N-linked (GlcNAc...) asparagine glycans are attached at residues Asn-252 and Asn-280. The DHHC domain maps to 299 to 349 (KFCITCGLYREPRSFHCSTCNNCVENFDHHCVWIGNCIGRRNYREFFYFIT). Cys-329 functions as the S-palmitoyl cysteine intermediate in the catalytic mechanism. A helical membrane pass occupies residues 344 to 364 (FFYFITTTLIYALYLLSMSIV). N-linked (GlcNAc...) asparagine glycans are attached at residues Asn-371, Asn-388, and Asn-393. Residues 419–439 (GLCIFIIIFGFIMSLLLGFLV) traverse the membrane as a helical segment. Asn-449, Asn-483, and Asn-494 each carry an N-linked (GlcNAc...) asparagine glycan.

The protein belongs to the DHHC palmitoyltransferase family.

The protein resides in the membrane. It catalyses the reaction L-cysteinyl-[protein] + hexadecanoyl-CoA = S-hexadecanoyl-L-cysteinyl-[protein] + CoA. The polypeptide is Putative ZDHHC-type palmitoyltransferase 3 (Dictyostelium discoideum (Social amoeba)).